The primary structure comprises 495 residues: uncharacterized protein (495 aa).

Its subcellular location is the cytoplasm. The protein localises to the nucleus. This is an uncharacterized protein from Saccharomyces cerevisiae (strain ATCC 204508 / S288c) (Baker's yeast).